Here is a 317-residue protein sequence, read N- to C-terminus: L-lactate dehydrogenase 1 (317 aa).

NAD(+) is bound by residues V17, D38, K43, Y69, and 83-84 (GA). Positions 86 and 92 each coordinate substrate. NAD(+)-binding positions include S105, 122–124 (ATN), and S147. 124–127 (NPVD) lines the substrate pocket. 152–155 (DSAR) provides a ligand contact to substrate. The Proton acceptor role is filled by H179. Residue Y223 is modified to Phosphotyrosine. T232 contacts substrate.

The protein belongs to the LDH/MDH superfamily. LDH family. Homotetramer.

It localises to the cytoplasm. The enzyme catalyses (S)-lactate + NAD(+) = pyruvate + NADH + H(+). Its pathway is fermentation; pyruvate fermentation to lactate; (S)-lactate from pyruvate: step 1/1. Its function is as follows. Catalyzes the conversion of lactate to pyruvate (Potential). Appears to be the primary factor that allows S.aureus growth during nitrosative stress in both aerobically and anaerobically cultured cells. The polypeptide is L-lactate dehydrogenase 1 (Staphylococcus aureus (strain MRSA252)).